The following is a 675-amino-acid chain: Methionine--tRNA ligase (675 aa).

The 'HIGH' region motif lies at 12-22 (PYANGPIHLGH). 4 residues coordinate Zn(2+): C143, C146, C156, and C159. Residues 328-332 (KMSKS) carry the 'KMSKS' region motif. K331 is a binding site for ATP. Residues 574 to 675 (DFAKVDLRIA…QGAQPGMRVK (102 aa)) form the tRNA-binding domain.

This sequence belongs to the class-I aminoacyl-tRNA synthetase family. MetG type 1 subfamily. As to quaternary structure, homodimer. The cofactor is Zn(2+).

The protein localises to the cytoplasm. It carries out the reaction tRNA(Met) + L-methionine + ATP = L-methionyl-tRNA(Met) + AMP + diphosphate. Functionally, is required not only for elongation of protein synthesis but also for the initiation of all mRNA translation through initiator tRNA(fMet) aminoacylation. This Alkalilimnicola ehrlichii (strain ATCC BAA-1101 / DSM 17681 / MLHE-1) protein is Methionine--tRNA ligase.